A 973-amino-acid chain; its full sequence is 109 kDa U5 small nuclear ribonucleoprotein component GFL (973 aa).

Residues 1-40 (MDGSLYGECGNYIGPEIESDRDSDDSVEDEDLQEPGGSNG) are disordered. Positions 17 to 33 (IESDRDSDDSVEDEDLQ) are enriched in acidic residues. A tr-type G domain is found at 122–408 (ALVRNVALVG…LGVTLSNSAY (287 aa)). The tract at residues 131–138 (GHLQHGKT) is G1. Residue 131-138 (GHLQHGKT) coordinates GTP. Positions 175-179 (NISIK) are G2. The tract at residues 201–204 (DTPG) is G3. Residues 201 to 205 (DTPGN) and 255 to 258 (NKVD) each bind GTP. The G4 stretch occupies residues 255-258 (NKVD). The G5 stretch occupies residues 381–383 (YSQ).

This sequence belongs to the TRAFAC class translation factor GTPase superfamily. Classic translation factor GTPase family. In terms of tissue distribution, expressed in flower buds, open flowers and siliques. Expressed at low levels in rosettes leaves, cauline leaves and stems.

Its subcellular location is the nucleus speckle. Its function is as follows. Splicing factor involved in pre-mRNA splicing and component of the spliceosome. In Arabidopsis thaliana (Mouse-ear cress), this protein is 109 kDa U5 small nuclear ribonucleoprotein component GFL.